Consider the following 377-residue polypeptide: WAT1-related protein At5g13670 (377 aa).

Transmembrane regions (helical) follow at residues 9 to 29 (FIAI…AKLA), 38 to 58 (VLVA…ALIL), 64 to 84 (PKLT…EPVV), 99 to 119 (TFTS…ACVF), 136 to 156 (VGTM…GNVI), 187 to 207 (IMLV…AKIL), 214 to 234 (LSLT…MGLI), 251 to 271 (LLAS…IGWA), 279 to 299 (FVSA…TFVF), and 303 to 323 (VYVG…LVLW). EamA domains follow at residues 18-149 (LYAL…MLMT) and 194-322 (FSWS…YLVL).

It belongs to the drug/metabolite transporter (DMT) superfamily. Plant drug/metabolite exporter (P-DME) (TC 2.A.7.4) family.

The protein resides in the membrane. In Arabidopsis thaliana (Mouse-ear cress), this protein is WAT1-related protein At5g13670.